A 376-amino-acid chain; its full sequence is Lipoprotein p33 (376 aa).

The signal sequence occupies residues 1–30; that stretch reads MKIKKIKLLKALALTGAFGIVATVPVIVYS. Residue C31 is the site of N-palmitoyl cysteine attachment. C31 carries S-diacylglycerol cysteine lipidation. Residues 35-59 are disordered; it reads DNNGGTGDNNTGGGGSGTDQQQGTT. Positions 38-51 are enriched in gly residues; the sequence is GGTGDNNTGGGGSG.

The protein belongs to the p35 lipoprotein family.

The protein localises to the cell membrane. The chain is Lipoprotein p33 from Malacoplasma penetrans (Mycoplasma penetrans).